The chain runs to 158 residues: Cytochrome c-type biogenesis protein CcmE (158 aa).

The Cytoplasmic segment spans residues 1-8 (MNIRRRRR). A helical; Signal-anchor for type II membrane protein transmembrane segment spans residues 9 to 29 (LLVVVAILVGLGLATGLVMYA). Residues 30 to 158 (LRSNIDLFYT…GLLNVSEPTR (129 aa)) lie on the Periplasmic side of the membrane. Residues histidine 130 and tyrosine 134 each coordinate heme.

The protein belongs to the CcmE/CycJ family.

The protein localises to the cell inner membrane. In terms of biological role, heme chaperone required for the biogenesis of c-type cytochromes. Transiently binds heme delivered by CcmC and transfers the heme to apo-cytochromes in a process facilitated by CcmF and CcmH. The sequence is that of Cytochrome c-type biogenesis protein CcmE from Tatumella citrea (Pantoea citrea).